A 33-amino-acid chain; its full sequence is Cytochrome b6-f complex subunit 8 (33 aa).

A helical membrane pass occupies residues Leu-2–Val-22.

The protein belongs to the PetN family. In terms of assembly, the 4 large subunits of the cytochrome b6-f complex are cytochrome b6, subunit IV (17 kDa polypeptide, PetD), cytochrome f and the Rieske protein, while the 4 small subunits are PetG, PetL, PetM and PetN. The complex functions as a dimer.

Its subcellular location is the cellular thylakoid membrane. In terms of biological role, component of the cytochrome b6-f complex, which mediates electron transfer between photosystem II (PSII) and photosystem I (PSI), cyclic electron flow around PSI, and state transitions. The chain is Cytochrome b6-f complex subunit 8 from Synechococcus sp. (strain WH7803).